An 825-amino-acid polypeptide reads, in one-letter code: Extracellular exo-alpha-L-arabinofuranosidase (825 aa).

Positions 1-29 (MSRIRWRYGTAATALLVAAGLVPTATAHA) are cleaved as a signal peptide. Position 58 (Glu-58) interacts with alpha-L-arabinofuranose. The CBM-cenC domain maps to 70–215 (AELVQNRSFE…ALDMVSLFPR (146 aa)). Alpha-L-arabinofuranose contacts are provided by residues Cys-247 and 379–380 (NE). The active-site Proton donor/acceptor is Glu-380.

Belongs to the glycosyl hydrolase 51 family.

It localises to the secreted. The catalysed reaction is Hydrolysis of terminal non-reducing alpha-L-arabinofuranoside residues in alpha-L-arabinosides.. Its function is as follows. Involved in the degradation of arabinan and is a key enzyme in the complete degradation of the plant cell wall. Catalyzes the cleavage of terminal alpha-L-arabinofuranosyl residues of arabinan present in the arabinofuranosyl polysaccharides or oligosaccharides. It cannot act on other arabinose-containing polysaccharides and arabinoxylo-oligosaccharides. It leaves most of the polymer intact, including most of the main-chain residues and the arabinose side chains. It acts preferentially on the linear alpha-(1-&gt;2)-linked arabinofuranobiosides and alpha-(1-&gt;3)-linked arabinofuranobiosides, and is much less effective on alpha-(1-&gt;5)-linked arabinofuranobiosides. It also hydrolyzes the terminal alpha-(1-&gt;3)-linked arabinofuranotriosides in preference to the alpha-(1-&gt;5)-linked arabinofuranotriosides. This is Extracellular exo-alpha-L-arabinofuranosidase from Streptomyces chartreusis.